A 421-amino-acid polypeptide reads, in one-letter code: UDP-N-acetylglucosamine 1-carboxyvinyltransferase (421 aa).

22–23 is a phosphoenolpyruvate binding site; sequence KN. R93 contacts UDP-N-acetyl-alpha-D-glucosamine. The active-site Proton donor is the C117. A 2-(S-cysteinyl)pyruvic acid O-phosphothioketal modification is found at C117. UDP-N-acetyl-alpha-D-glucosamine contacts are provided by residues 122–126, D308, and V330; that span reads RPVDL.

Belongs to the EPSP synthase family. MurA subfamily.

The protein resides in the cytoplasm. The catalysed reaction is phosphoenolpyruvate + UDP-N-acetyl-alpha-D-glucosamine = UDP-N-acetyl-3-O-(1-carboxyvinyl)-alpha-D-glucosamine + phosphate. The protein operates within cell wall biogenesis; peptidoglycan biosynthesis. In terms of biological role, cell wall formation. Adds enolpyruvyl to UDP-N-acetylglucosamine. The sequence is that of UDP-N-acetylglucosamine 1-carboxyvinyltransferase from Pseudomonas aeruginosa (strain LESB58).